Here is a 95-residue protein sequence, read N- to C-terminus: Aspartyl/glutamyl-tRNA(Asn/Gln) amidotransferase subunit C (95 aa).

Belongs to the GatC family. In terms of assembly, heterotrimer of A, B and C subunits.

It catalyses the reaction L-glutamyl-tRNA(Gln) + L-glutamine + ATP + H2O = L-glutaminyl-tRNA(Gln) + L-glutamate + ADP + phosphate + H(+). The enzyme catalyses L-aspartyl-tRNA(Asn) + L-glutamine + ATP + H2O = L-asparaginyl-tRNA(Asn) + L-glutamate + ADP + phosphate + 2 H(+). Allows the formation of correctly charged Asn-tRNA(Asn) or Gln-tRNA(Gln) through the transamidation of misacylated Asp-tRNA(Asn) or Glu-tRNA(Gln) in organisms which lack either or both of asparaginyl-tRNA or glutaminyl-tRNA synthetases. The reaction takes place in the presence of glutamine and ATP through an activated phospho-Asp-tRNA(Asn) or phospho-Glu-tRNA(Gln). The polypeptide is Aspartyl/glutamyl-tRNA(Asn/Gln) amidotransferase subunit C (Chlorobium phaeovibrioides (strain DSM 265 / 1930) (Prosthecochloris vibrioformis (strain DSM 265))).